Here is a 712-residue protein sequence, read N- to C-terminus: TIR domain-containing adapter molecule 1 (712 aa).

The interval 1-153 (MACTGPSLPS…CGWDIAGDPG (153 aa)) is TRIF-NTD. The short motif at 84 to 91 (EDPEEPPD) is the TRAF6-binding element. The pLxIS motif signature appears at 207–210 (LEIS). The residue at position 210 (serine 210) is a Phosphoserine; by TBK1. 2 disordered regions span residues 216–316 (PFLS…SLPL) and 336–384 (LSVE…LFPS). Residue lysine 229 forms a Glycyl lysine isopeptide (Lys-Gly) (interchain with G-Cter in ubiquitin) linkage. The TRAF6-binding motif lies at 248-255 (QEPEEMSW). Residues 265–275 (PELPSSPPPGL) show a composition bias toward pro residues. The TRAF6-binding motif lies at 299–309 (NYPVECTEGSA). The span at 347-369 (KPCPPTPTTPETSPPPPPPPPSS) shows a compositional bias: pro residues. A TIR domain is found at 393–553 (KFYNFVILHA…QDTRALREQS (161 aa)). Positions 512-712 (RLDEHSQIFA…APEDKTQEAE (201 aa)) are sufficient to induce apoptosis. Composition is skewed to pro residues over residues 620-633 (PFPT…PPPL) and 640-649 (TPPPPSPQPA). The disordered stretch occupies residues 620 to 677 (PFPTWPGCPQPPPLHAWQAGTPPPPSPQPAAFPQSLPFPQSPAFPTASPAPPQSPGLQ). Residues 650 to 666 (AFPQSLPFPQSPAFPTA) show a composition bias toward low complexity.

As to quaternary structure, homodimer. Found in a multi-helicase-TICAM1 complex at least composed of DHX36, DDX1, DDX21 and TICAM1; this complex exists in resting cells with or without poly(I:C) RNA ligand stimulation. Interacts (via TIR domain) with DDX21 (via C-terminus). Interacts (via TIR domain) with DHX36 (via C-terminus). Interacts with AZI2 and IRF7. Interacts with TICAM2 in TLR4 recruitment. Interaction with PIAS4 inhibits the TICAM1-induced NF-kappa-B, IRF and IFNB1 activation. Interacts with IKBKB and IKBKE. Interaction with SARM1 blocks TICAM1-dependent transcription factor activation. Interacts with TRAF3. Interacts (when phosphorylated) with IRF3; following activation and phosphorylation on the pLxIS motif by TBK1, recruits IRF3. Interacts with TBK1, TRAF6 and RIPK1 and these interactions are enhanced in the presence of WDFY1. Interacts with TRAFD1. Interacts with UBQLN1 (via UBA domain). Interacts with TLR4. Interacts with WDFY1 in response to poly(I:C). Interacts (via the TIR domain) with TLR3 in response to poly(I:C) and this interaction is enhanced in the presence of WDFY1. Interacts with TRIM56. Component of a multi-helicase-TICAM1 complex that acts as a cytoplasmic sensor of viral double-stranded RNA (dsRNA) and plays a role in the activation of a cascade of antiviral responses including the induction of pro-inflammatory cytokines. Interacts (via the TIR domain) with TLR5. Interacts with TRIM8. Interacts with TAX1BP1 and TRIM32; these interactions target TICAM1 to TAX1BP1-mediated selective autophagic degradation. Interacts with DDX50. In terms of assembly, (Microbial infection) Interacts with hepatitis C virus (HCV) NS3/4A protease; this interaction leads to TICAM1 cleavage, thereby disrupting TLR3 signaling and preventing the establishment of an antiviral state. (Microbial infection) Interacts with Seneca Valley virus protease 3C; this interaction allows the cleavage of TICAM1/TRIF and subsequent suppression of host innate immunity. As to quaternary structure, (Microbial infection) Interacts (via C-terminus) with coxsackievirus B3 (CVB3) protease 3C. Phosphorylated by TBK1. Following activation, phosphorylated by TBK1 at Ser-210 in the pLxIS motif. The phosphorylated pLxIS motif constitutes an IRF3-binding motif, leading to recruitment of the transcription factor IRF3 to induce type-I interferons and other cytokines. In terms of processing, polyubiquitinated at Lys-229 by TRIM38 with 'Lys-48'-linked chains, leading to proteasomal degradation. Polyubiquitinated with 'Lys-6'- and 'Lys-33'-linked chains in a TRIM8-dependent manner; ubiquitination disrupts the interaction with TBK1 and subsequent interferon production. Post-translationally, (Microbial infection) Cleaved and degraded by hepatitis A virus (HAV) protein 3CD allowing the virus to disrupt host TLR3 signaling. (Microbial infection) Cleaved by CVB3 protease 3C allowing the virus to disrupt host TLR3 signaling. In terms of processing, (Microbial infection) Cleaved by Seneca Valley virus protease 3C allowing the virus to disrupt host TLR3 signaling. Post-translationally, (Microbial infection) Cleaved by protease 3C of human enterovirus D68 (EV68) allowing the virus to disrupt host TLR3 signaling. (Microbial infection) Cleaved by HCV protease NS3/4A, thereby disrupting TLR3 signaling and preventing the establishment of an antiviral state. In terms of tissue distribution, ubiquitously expressed but with higher levels in liver.

Its subcellular location is the cytoplasmic vesicle. It is found in the autophagosome. The protein resides in the cytoplasm. The protein localises to the cytosol. It localises to the mitochondrion. Involved in innate immunity against invading pathogens. Adapter used by TLR3, TLR4 (through TICAM2) and TLR5 to mediate NF-kappa-B and interferon-regulatory factor (IRF) activation, and to induce apoptosis. Ligand binding to these receptors results in TRIF recruitment through its TIR domain. Distinct protein-interaction motifs allow recruitment of the effector proteins TBK1, TRAF6 and RIPK1, which in turn, lead to the activation of transcription factors IRF3 and IRF7, NF-kappa-B and FADD respectively. Phosphorylation by TBK1 on the pLxIS motif leads to recruitment and subsequent activation of the transcription factor IRF3 to induce expression of type I interferon and exert a potent immunity against invading pathogens. Component of a multi-helicase-TICAM1 complex that acts as a cytoplasmic sensor of viral double-stranded RNA (dsRNA) and plays a role in the activation of a cascade of antiviral responses including the induction of pro-inflammatory cytokines. The protein is TIR domain-containing adapter molecule 1 (TICAM1) of Homo sapiens (Human).